The chain runs to 343 residues: Dihydroorotase (343 aa).

The Zn(2+) site is built by H14 and H16. Substrate contacts are provided by residues 16-18 and N42; that span reads HLR. The Zn(2+) site is built by K99, H136, and H174. K99 carries the N6-carboxylysine modification. A substrate-binding site is contributed by H136. L219 contributes to the substrate binding site. D247 contributes to the Zn(2+) binding site. The active site involves D247. Substrate is bound by residues H251 and A263.

It belongs to the metallo-dependent hydrolases superfamily. DHOase family. Class II DHOase subfamily. Homodimer. Requires Zn(2+) as cofactor.

It catalyses the reaction (S)-dihydroorotate + H2O = N-carbamoyl-L-aspartate + H(+). The protein operates within pyrimidine metabolism; UMP biosynthesis via de novo pathway; (S)-dihydroorotate from bicarbonate: step 3/3. In terms of biological role, catalyzes the reversible cyclization of carbamoyl aspartate to dihydroorotate. This Psychromonas ingrahamii (strain DSM 17664 / CCUG 51855 / 37) protein is Dihydroorotase.